The following is a 305-amino-acid chain: Flagellin FlaB2 (305 aa).

A propeptide spans 1–18 (MGLQKIVKKYNKKMKRKG) (propeptide).

Belongs to the archaeal flagellin family. Post-translationally, glycosylated.

Its subcellular location is the archaeal flagellum. In terms of biological role, flagellin is the subunit protein which polymerizes to form the filaments of archaeal flagella. The protein is Flagellin FlaB2 of Saccharolobus shibatae (strain ATCC 51178 / DSM 5389 / JCM 8931 / NBRC 15437 / B12) (Sulfolobus shibatae).